Reading from the N-terminus, the 897-residue chain is Ubiquitin carboxyl-terminal hydrolase 33 (897 aa).

The segment at 7–110 (NDCPHLECVG…KQLPNAAKAV (104 aa)) adopts a UBP-type zinc-finger fold. Zn(2+)-binding residues include Cys-9, His-11, Cys-31, Cys-34, Cys-44, Cys-49, Cys-54, His-61, His-65, His-71, Cys-84, and Cys-87. One can recognise a USP domain in the interval 156–670 (TGLKNIGNTC…EAYVLFYKKS (515 aa)). The Nucleophile role is filled by Cys-165. Disordered regions lie at residues 261-308 (LIPE…GPRV) and 343-420 (GSHG…HKKV). Polar residues predominate over residues 287 to 297 (DDFQSCESCGS). Basic and acidic residues-rich tracts occupy residues 299–308 (DRADNEGPRV) and 344–353 (SHGDLDKDVD). The segment covering 355–396 (TSDSRPIISSQGAIKAQGRTSDSEIQVSSTVRPQSPTGNEGI) has biased composition (polar residues). A compositionally biased stretch (low complexity) spans 398–411 (SRLSSSPPKSSAWP). His-628 serves as the catalytic Proton acceptor. DUSP domains follow at residues 672 to 765 (DETQ…LYVC) and 773 to 876 (EKLE…RPSV). The span at 875-884 (SVSHQESETS) shows a compositional bias: low complexity. The tract at residues 875–897 (SVSHQESETSQSEEKIEVETRTV) is disordered. Positions 886-897 (SEEKIEVETRTV) are enriched in basic and acidic residues.

This sequence belongs to the peptidase C19 family. USP20/USP33 subfamily.

It is found in the cytoplasm. The protein resides in the perinuclear region. Its subcellular location is the cytoskeleton. The protein localises to the microtubule organizing center. It localises to the centrosome. The enzyme catalyses Thiol-dependent hydrolysis of ester, thioester, amide, peptide and isopeptide bonds formed by the C-terminal Gly of ubiquitin (a 76-residue protein attached to proteins as an intracellular targeting signal).. In terms of biological role, deubiquitinating enzyme involved in various processes such as centrosome duplication, cellular migration and beta-2 adrenergic receptor/ADRB2 recycling. Involved in regulation of centrosome duplication by mediating deubiquitination of ccp110 in S and G2/M phase, leading to stabilize ccp110 during the period which centrioles duplicate and elongate. Involved in cell migration via its interaction with intracellular domain of robo1, leading to regulate the Slit signaling. Plays a role in commissural axon guidance cross the ventral midline of the neural tube in a Slit-dependent manner, possibly by mediating the deubiquitination of robo1. Acts as a regulator of G-protein coupled receptor (GPCR) signaling by mediating the deubiquitination of beta-arrestins (arrb1 and arrb2) and beta-2 adrenergic receptor (adrb2). Deubiquitinates dio2, thereby regulating thyroid hormone regulation. Mediates deubiquitination of both 'Lys-48'- and 'Lys-63'-linked polyubiquitin chains. This is Ubiquitin carboxyl-terminal hydrolase 33 (usp33) from Danio rerio (Zebrafish).